The following is a 142-amino-acid chain: General odorant-binding protein 99a (142 aa).

The signal sequence occupies residues 1–16 (MKVFVAICVLIGLASA). 3 disulfides stabilise this stretch: cysteine 33–cysteine 64, cysteine 60–cysteine 116, and cysteine 105–cysteine 125.

Belongs to the PBP/GOBP family. Expressed in larval chemosensory organ. Specifically expressed exclusively in a subset of chemosensory sensilla on the third antennal segment.

The protein resides in the secreted. Present in the aqueous fluid surrounding olfactory sensory dendrites and are thought to aid in the capture and transport of hydrophobic odorants into and through this fluid. This is General odorant-binding protein 99a (Obp99a) from Drosophila melanogaster (Fruit fly).